We begin with the raw amino-acid sequence, 69 residues long: Small integral membrane protein 20 (69 aa).

The Mitochondrial matrix segment spans residues 1–8 (MAAARNLR). A helical transmembrane segment spans residues 9 to 29 (TALIFGGFISMVGAAFYPIYF). Over 30–69 (RPLLRLEEYQKEQAVNRAGIVQEDVQPPGLKVWSDPFGRK) the chain is Mitochondrial intermembrane. Phenylalanine 66 is subject to Phenylalanine amide.

As to quaternary structure, component of the MITRAC (mitochondrial translation regulation assembly intermediate of cytochrome c oxidase complex) complex, the core components of this complex being Coa3/Mitrac12 and Cox14. Interacts with Coa3/Mitrac12 and Cox4i1. Directly interacts with newly synthesized Mt-Co1/Cox1. In terms of tissue distribution, highly expressed in the hypothalamus, substantia nigra reticulata, Edinger-Westphal nucleus, and nucleus of the solitary tract/dorsal motor nucleus of the vagus, the spinal cord, and sensory ganglia (at protein level). Also expressed in the heart, thymus, esophagus, stomach, spleen, lung, pituitary gland, kidney, jejunum, duodenum, ileum, cerebrum, pons, and colon (at protein level). Expressed in preadipocytes and apidocytes (at protein level). Expressed in pancreatic islet cells (at protein level).

It localises to the mitochondrion inner membrane. Its subcellular location is the secreted. Its function is as follows. Component of the MITRAC (mitochondrial translation regulation assembly intermediate of cytochrome c oxidase complex) complex, that regulates cytochrome c oxidase assembly. Promotes the progression of complex assembly after the association of Mt-Co1/Cox11 with Cox4I1 and Cox6c. Chaperone-like assembly factor required to stabilize newly synthesized Mt-Co1/Cox1 and to prevent its premature turnover. Peptide involved in a broad spectrum of regulatory functions. Is a ligand for GPR173. As part of the reproductive cycle, it regulates gonadotropin-releasing hormone (GnRH) signaling in the hypothalamus and pituitary gland which augments the release of luteinizing hormone. More specifically, it regulates the expression of transcription factors CEBPB and POU2F1/OCT1 through the cAMP-PKA signaling pathway, which subsequently regulate the expression of GNRHR and KISS1. Plays a protective role in memory retention through activation of GNRHR. Regulates the secretion of AVP by hypothalamic neurons. Plays a role in the transduction of the itch sensation. Induces anxiolytic effects, reducing behavior associated with anxiety. Regulates food intake as well as satiation and satiety by increasing NUCB2 expression in neurons. In the ovary, it regulates follicular growth by stimulating granulosa cell proliferation by increasing the expression of GPR173, CREB1, CYP19A1, KITLG, FSHR, and LHCGR. It also increases the production of estradiol (E2). In the heart, it regulates contractility and relaxation by activating the AKT1-NOS3 and MAPK1-MAPK3 signaling pathways. It also plays a cardioprotective role during ischemia, where it activates the SAFE and RISK pathways. Stimulates the proliferation and differentiation of preadipocytes. In pancreatic islet cells, it induces proliferation of islet cells as well as the production of INS1 and INS2 through activation of the MAPK1-MAPK3 signaling pathways. In Rattus norvegicus (Rat), this protein is Small integral membrane protein 20.